A 266-amino-acid polypeptide reads, in one-letter code: Putative carbamate hydrolase RutD (266 aa).

This sequence belongs to the AB hydrolase superfamily. Hydrolase RutD family.

The catalysed reaction is carbamate + 2 H(+) = NH4(+) + CO2. Functionally, involved in pyrimidine catabolism. May facilitate the hydrolysis of carbamate, a reaction that can also occur spontaneously. The sequence is that of Putative carbamate hydrolase RutD from Escherichia coli O45:K1 (strain S88 / ExPEC).